The chain runs to 790 residues: Lon protease (790 aa).

Positions 23–220 (LPIMPIFHTV…EITLIVNHQL (198 aa)) constitute a Lon N-terminal domain. Position 372-379 (372-379 (GPPGTGKT)) interacts with ATP. In terms of domain architecture, Lon proteolytic spans 608 to 789 (ISKPGIAMGL…REVLNIALSR (182 aa)). Catalysis depends on residues S695 and K738.

The protein belongs to the peptidase S16 family. As to quaternary structure, homohexamer. Organized in a ring with a central cavity.

It localises to the cytoplasm. The catalysed reaction is Hydrolysis of proteins in presence of ATP.. Its function is as follows. ATP-dependent serine protease that mediates the selective degradation of mutant and abnormal proteins as well as certain short-lived regulatory proteins. Required for cellular homeostasis and for survival from DNA damage and developmental changes induced by stress. Degrades polypeptides processively to yield small peptide fragments that are 5 to 10 amino acids long. Binds to DNA in a double-stranded, site-specific manner. This is Lon protease from Syntrophus aciditrophicus (strain SB).